The primary structure comprises 488 residues: Probable glycine dehydrogenase (decarboxylating) subunit 2 (488 aa).

Lysine 273 is modified (N6-(pyridoxal phosphate)lysine).

Belongs to the GcvP family. C-terminal subunit subfamily. As to quaternary structure, the glycine cleavage system is composed of four proteins: P, T, L and H. In this organism, the P 'protein' is a heterodimer of two subunits. Requires pyridoxal 5'-phosphate as cofactor.

It catalyses the reaction N(6)-[(R)-lipoyl]-L-lysyl-[glycine-cleavage complex H protein] + glycine + H(+) = N(6)-[(R)-S(8)-aminomethyldihydrolipoyl]-L-lysyl-[glycine-cleavage complex H protein] + CO2. The glycine cleavage system catalyzes the degradation of glycine. The P protein binds the alpha-amino group of glycine through its pyridoxal phosphate cofactor; CO(2) is released and the remaining methylamine moiety is then transferred to the lipoamide cofactor of the H protein. The chain is Probable glycine dehydrogenase (decarboxylating) subunit 2 from Halalkalibacterium halodurans (strain ATCC BAA-125 / DSM 18197 / FERM 7344 / JCM 9153 / C-125) (Bacillus halodurans).